The sequence spans 118 residues: Large ribosomal subunit protein uL18 (118 aa).

This sequence belongs to the universal ribosomal protein uL18 family. In terms of assembly, part of the 50S ribosomal subunit; part of the 5S rRNA/L5/L18/L25 subcomplex. Contacts the 5S and 23S rRNAs.

Its function is as follows. This is one of the proteins that bind and probably mediate the attachment of the 5S RNA into the large ribosomal subunit, where it forms part of the central protuberance. This chain is Large ribosomal subunit protein uL18, found in Acidobacterium capsulatum (strain ATCC 51196 / DSM 11244 / BCRC 80197 / JCM 7670 / NBRC 15755 / NCIMB 13165 / 161).